The sequence spans 178 residues: Endoribonuclease YbeY (178 aa).

The Zn(2+) site is built by histidine 118, histidine 122, and histidine 128. The tract at residues 156–178 (YQQDRQDERDRRLLDKSRYFDEP) is disordered. The span at 159 to 178 (DRQDERDRRLLDKSRYFDEP) shows a compositional bias: basic and acidic residues.

Belongs to the endoribonuclease YbeY family. Zn(2+) serves as cofactor.

The protein localises to the cytoplasm. Its function is as follows. Single strand-specific metallo-endoribonuclease involved in late-stage 70S ribosome quality control and in maturation of the 3' terminus of the 16S rRNA. The polypeptide is Endoribonuclease YbeY (Mycobacterium marinum (strain ATCC BAA-535 / M)).